A 341-amino-acid chain; its full sequence is Heat-inducible transcription repressor HrcA (341 aa).

It belongs to the HrcA family.

Its function is as follows. Negative regulator of class I heat shock genes (grpE-dnaK-dnaJ and groELS operons). Prevents heat-shock induction of these operons. The chain is Heat-inducible transcription repressor HrcA from Corynebacterium jeikeium (strain K411).